Here is an 82-residue protein sequence, read N- to C-terminus: Cytochrome c oxidase-assembly factor cox-23, mitochondrial (82 aa).

The tract at residues 1 to 27 (MAQAGSENKEPWNEETRAKFEGKSRSE) is disordered. A compositionally biased stretch (basic and acidic residues) spans 7–27 (ENKEPWNEETRAKFEGKSRSE). A CHCH domain is found at 29–71 (LDPCQEAAQRSIRCLHRNQGDRTMCSDYFEAYRECKKQWIERR). Short sequence motifs (cx9C motif) lie at residues 32-42 (CQEAAQRSIRC) and 53-63 (CSDYFEAYREC). 2 disulfide bridges follow: Cys-32–Cys-63 and Cys-42–Cys-53.

It belongs to the COX23 family.

The protein resides in the mitochondrion intermembrane space. Functionally, required for the assembly of cytochrome c oxidase. The chain is Cytochrome c oxidase-assembly factor cox-23, mitochondrial (cox-23) from Neurospora crassa (strain ATCC 24698 / 74-OR23-1A / CBS 708.71 / DSM 1257 / FGSC 987).